The primary structure comprises 933 residues: Valine--tRNA ligase (933 aa).

Residues 1–24 (MIERVKTTKLSEASGLPKTYDPVG) are disordered. The 'HIGH' region signature appears at 57–67 (PNVTGSLHMGH). Residues 557–561 (KMSKS) carry the 'KMSKS' region motif. Lys560 is a binding site for ATP. Residues 866–932 (LIDIASLRSR…RLVKERLMGL (67 aa)) are a coiled coil.

This sequence belongs to the class-I aminoacyl-tRNA synthetase family. ValS type 1 subfamily. Monomer.

The protein localises to the cytoplasm. The catalysed reaction is tRNA(Val) + L-valine + ATP = L-valyl-tRNA(Val) + AMP + diphosphate. Catalyzes the attachment of valine to tRNA(Val). As ValRS can inadvertently accommodate and process structurally similar amino acids such as threonine, to avoid such errors, it has a 'posttransfer' editing activity that hydrolyzes mischarged Thr-tRNA(Val) in a tRNA-dependent manner. The protein is Valine--tRNA ligase of Prochlorococcus marinus (strain NATL2A).